Reading from the N-terminus, the 937-residue chain is Protein translocase subunit SecA (937 aa).

ATP is bound by residues glutamine 87, 105–109 (GEGKT), and aspartate 494. Positions 881–937 (RGLNYIGPDEGGRASVHSDAEEYGGGTPAAAGTRRERREAARAEGKGKRGPKSRRKH) are disordered. 2 stretches are compositionally biased toward basic and acidic residues: residues 890–900 (EGGRASVHSDA) and 913–927 (TRRE…EGKG). A compositionally biased stretch (basic residues) spans 928–937 (KRGPKSRRKH).

The protein belongs to the SecA family. Monomer and homodimer. Part of the essential Sec protein translocation apparatus which comprises SecA, SecYEG and auxiliary proteins SecDF. Other proteins may also be involved.

It is found in the cell membrane. The protein resides in the cytoplasm. The catalysed reaction is ATP + H2O + cellular proteinSide 1 = ADP + phosphate + cellular proteinSide 2.. Functionally, part of the Sec protein translocase complex. Interacts with the SecYEG preprotein conducting channel. Has a central role in coupling the hydrolysis of ATP to the transfer of proteins into and across the cell membrane, serving as an ATP-driven molecular motor driving the stepwise translocation of polypeptide chains across the membrane. This chain is Protein translocase subunit SecA, found in Nocardia farcinica (strain IFM 10152).